We begin with the raw amino-acid sequence, 475 residues long: Rho GTPase-activating protein 15 (475 aa).

A compositionally biased stretch (polar residues) spans 1–22 (MQKSTNSDTSVETLNSTRQGTG). The segment at 1–23 (MQKSTNSDTSVETLNSTRQGTGA) is disordered. A phosphoserine mark is found at S43, S103, S196, S199, and S243. The region spanning 79-189 (MVEKEGYLQK…WFHAIKNAID (111 aa)) is the PH domain. A Rho-GAP domain is found at 281–470 (SHLHKVCERE…LMLSEYSKIF (190 aa)).

In terms of tissue distribution, expressed in lung, liver and lymphoid cells.

It is found in the cytoplasm. The protein localises to the membrane. Functionally, GTPase activator for the Rho-type GTPases by converting them to an inactive GDP-bound state. Has activity toward RAC1. Overexpression results in an increase in actin stress fibers and cell contraction. The chain is Rho GTPase-activating protein 15 (ARHGAP15) from Homo sapiens (Human).